A 294-amino-acid polypeptide reads, in one-letter code: ATP synthase gamma chain (294 aa).

The protein belongs to the ATPase gamma chain family. In terms of assembly, F-type ATPases have 2 components, CF(1) - the catalytic core - and CF(0) - the membrane proton channel. CF(1) has five subunits: alpha(3), beta(3), gamma(1), delta(1), epsilon(1). CF(0) has three main subunits: a, b and c.

Its subcellular location is the cell inner membrane. In terms of biological role, produces ATP from ADP in the presence of a proton gradient across the membrane. The gamma chain is believed to be important in regulating ATPase activity and the flow of protons through the CF(0) complex. This chain is ATP synthase gamma chain, found in Parvibaculum lavamentivorans (strain DS-1 / DSM 13023 / NCIMB 13966).